A 459-amino-acid polypeptide reads, in one-letter code: Bifunctional protein GlmU (459 aa).

A pyrophosphorylase region spans residues 1–229 (MSNFAIILAA…FDESLGVNDR (229 aa)). UDP-N-acetyl-alpha-D-glucosamine-binding positions include 8–11 (LAAG), Lys-22, Gln-72, and 77–78 (GT). Residue Asp-102 coordinates Mg(2+). UDP-N-acetyl-alpha-D-glucosamine-binding residues include Gly-139, Glu-154, Asn-169, and Asn-227. A Mg(2+)-binding site is contributed by Asn-227. Residues 230 to 250 (VALATAESVMRRRINHKHMVN) are linker. The interval 251-459 (GVSFVNPEAT…TRLPHHPKNQ (209 aa)) is N-acetyltransferase. Residues Arg-332 and Lys-350 each contribute to the UDP-N-acetyl-alpha-D-glucosamine site. Residue His-362 is the Proton acceptor of the active site. UDP-N-acetyl-alpha-D-glucosamine-binding residues include Tyr-365 and Asn-376. Residues Ala-379, 385–386 (NY), Ser-404, Ala-422, and Arg-439 each bind acetyl-CoA.

The protein in the N-terminal section; belongs to the N-acetylglucosamine-1-phosphate uridyltransferase family. This sequence in the C-terminal section; belongs to the transferase hexapeptide repeat family. In terms of assembly, homotrimer. It depends on Mg(2+) as a cofactor.

It is found in the cytoplasm. The catalysed reaction is alpha-D-glucosamine 1-phosphate + acetyl-CoA = N-acetyl-alpha-D-glucosamine 1-phosphate + CoA + H(+). The enzyme catalyses N-acetyl-alpha-D-glucosamine 1-phosphate + UTP + H(+) = UDP-N-acetyl-alpha-D-glucosamine + diphosphate. It functions in the pathway nucleotide-sugar biosynthesis; UDP-N-acetyl-alpha-D-glucosamine biosynthesis; N-acetyl-alpha-D-glucosamine 1-phosphate from alpha-D-glucosamine 6-phosphate (route II): step 2/2. Its pathway is nucleotide-sugar biosynthesis; UDP-N-acetyl-alpha-D-glucosamine biosynthesis; UDP-N-acetyl-alpha-D-glucosamine from N-acetyl-alpha-D-glucosamine 1-phosphate: step 1/1. It participates in bacterial outer membrane biogenesis; LPS lipid A biosynthesis. Catalyzes the last two sequential reactions in the de novo biosynthetic pathway for UDP-N-acetylglucosamine (UDP-GlcNAc). The C-terminal domain catalyzes the transfer of acetyl group from acetyl coenzyme A to glucosamine-1-phosphate (GlcN-1-P) to produce N-acetylglucosamine-1-phosphate (GlcNAc-1-P), which is converted into UDP-GlcNAc by the transfer of uridine 5-monophosphate (from uridine 5-triphosphate), a reaction catalyzed by the N-terminal domain. This Streptococcus pneumoniae (strain 70585) protein is Bifunctional protein GlmU.